The following is a 369-amino-acid chain: uncharacterized protein (369 aa).

A compositionally biased stretch (low complexity) spans 110–121 (ARPTDAFGAPIA). Positions 110–172 (ARPTDAFGAP…PPPPASGGGA (63 aa)) are disordered. The segment covering 122–136 (PSEPTPASAPSPPKA) has biased composition (pro residues).

This is an uncharacterized protein from Lymantria dispar multicapsid nuclear polyhedrosis virus (LdMNPV).